The following is a 281-amino-acid chain: Energy-coupling factor transporter ATP-binding protein EcfA1 (281 aa).

Positions 6–245 constitute an ABC transporter domain; it reads IKSEDLVFKY…VEKIKSIGLD (240 aa). 44–51 serves as a coordination point for ATP; sequence GHNGSGKS.

It belongs to the ABC transporter superfamily. Energy-coupling factor EcfA family. As to quaternary structure, forms a stable energy-coupling factor (ECF) transporter complex composed of 2 membrane-embedded substrate-binding proteins (S component), 2 ATP-binding proteins (A component) and 2 transmembrane proteins (T component).

The protein localises to the cell membrane. Functionally, ATP-binding (A) component of a common energy-coupling factor (ECF) ABC-transporter complex. Unlike classic ABC transporters this ECF transporter provides the energy necessary to transport a number of different substrates. This is Energy-coupling factor transporter ATP-binding protein EcfA1 from Clostridium perfringens (strain ATCC 13124 / DSM 756 / JCM 1290 / NCIMB 6125 / NCTC 8237 / Type A).